The primary structure comprises 172 residues: MNYFNVGKIVNTQGLQGEMRVLSVTDFAEERFKKGAKLALFDDKDQFAMEVEIASHRKAKNFDIIKFKGMYHINDIEKYKGFSLKIAEENLTDLEDGEFYYHEIIGLDVYENDILIGQIKEILQPGANDVWVVKRKGKKDLLLPYIPPVVLNIDIPNNRVDVELLEGLDDEN.

The 73-residue stretch at aspartate 96–leucine 168 folds into the PRC barrel domain.

This sequence belongs to the RimM family. In terms of assembly, binds ribosomal protein uS19.

Its subcellular location is the cytoplasm. In terms of biological role, an accessory protein needed during the final step in the assembly of 30S ribosomal subunit, possibly for assembly of the head region. Essential for efficient processing of 16S rRNA. May be needed both before and after RbfA during the maturation of 16S rRNA. It has affinity for free ribosomal 30S subunits but not for 70S ribosomes. The chain is Ribosome maturation factor RimM from Streptococcus suis (strain 05ZYH33).